We begin with the raw amino-acid sequence, 582 residues long: Aspartate--tRNA ligase (582 aa).

Glutamate 174 contributes to the L-aspartate binding site. The aspartate stretch occupies residues 198 to 201 (QITK). Arginine 220 provides a ligand contact to L-aspartate. Residues 220–222 (RDE) and glutamine 229 contribute to the ATP site. Position 443 (histidine 443) interacts with L-aspartate. Residue glutamate 477 coordinates ATP. L-aspartate is bound at residue arginine 484. Position 529–532 (529–532 (GLDR)) interacts with ATP.

Belongs to the class-II aminoacyl-tRNA synthetase family. Type 1 subfamily. In terms of assembly, homodimer.

The protein localises to the cytoplasm. The catalysed reaction is tRNA(Asp) + L-aspartate + ATP = L-aspartyl-tRNA(Asp) + AMP + diphosphate. Catalyzes the attachment of L-aspartate to tRNA(Asp) in a two-step reaction: L-aspartate is first activated by ATP to form Asp-AMP and then transferred to the acceptor end of tRNA(Asp). This is Aspartate--tRNA ligase from Streptococcus pyogenes serotype M3 (strain ATCC BAA-595 / MGAS315).